The sequence spans 256 residues: DNA repair protein RecO (256 aa).

This sequence belongs to the RecO family.

In terms of biological role, involved in DNA repair and RecF pathway recombination. This is DNA repair protein RecO from Anaeromyxobacter sp. (strain Fw109-5).